The primary structure comprises 346 residues: Biotin synthase (346 aa).

In terms of domain architecture, Radical SAM core spans Gln38–Thr256. [4Fe-4S] cluster-binding residues include Cys53, Cys57, and Cys60. [2Fe-2S] cluster is bound by residues Cys97, Cys128, Cys188, and Arg260.

It belongs to the radical SAM superfamily. Biotin synthase family. Homodimer. [4Fe-4S] cluster is required as a cofactor. Requires [2Fe-2S] cluster as cofactor.

It catalyses the reaction (4R,5S)-dethiobiotin + (sulfur carrier)-SH + 2 reduced [2Fe-2S]-[ferredoxin] + 2 S-adenosyl-L-methionine = (sulfur carrier)-H + biotin + 2 5'-deoxyadenosine + 2 L-methionine + 2 oxidized [2Fe-2S]-[ferredoxin]. It functions in the pathway cofactor biosynthesis; biotin biosynthesis; biotin from 7,8-diaminononanoate: step 2/2. Catalyzes the conversion of dethiobiotin (DTB) to biotin by the insertion of a sulfur atom into dethiobiotin via a radical-based mechanism. The protein is Biotin synthase of Salmonella gallinarum (strain 287/91 / NCTC 13346).